Consider the following 1156-residue polypeptide: Cartilage intermediate layer protein 2 (1156 aa).

Residues 1–20 form the signal peptide; sequence MASLLPLLCLCVVAAHLAGA. The TSP type-1 domain maps to 146 to 197; that stretch reads EASWGAWGPWGPCSGSCGPGRRLRRRHCPSPAGDACPGRPLEAQKCVRPRCP. 3 cysteine pairs are disulfide-bonded: C158–C191, C162–C196, and C173–C181. 3 N-linked (GlcNAc...) asparagine glycosylation sites follow: N276, N308, and N329. In terms of domain architecture, Ig-like C2-type spans 292 to 376; sequence PYLVKHPESR…AVRSGTARLT (85 aa). A disulfide bridge links C313 with C359. Positions 1134–1156 are disordered; sequence SEAAQAQARASGPLRTRRGRVRQ.

Post-translationally, may be cleaved into 2 chains possibly by a furin-like protease upon or preceding secretion. In terms of tissue distribution, expressed in articular chondrocytes but not in knee meniscal cartilage cells. Localizes to the intermediate to deep zone of articular cartilage.

The protein localises to the secreted. It is found in the extracellular space. Its subcellular location is the extracellular matrix. Its function is as follows. May play a role in cartilage scaffolding. The polypeptide is Cartilage intermediate layer protein 2 (CILP2) (Homo sapiens (Human)).